The chain runs to 547 residues: Probable bifunctional tRNA threonylcarbamoyladenosine biosynthesis protein (547 aa).

A kae1 region spans residues 1-329 (MDTSKDLICI…YRSDMVEVNW (329 aa)). Residues His112, His116, and Tyr133 each coordinate Fe cation. L-threonylcarbamoyladenylate contacts are provided by residues 133-137 (YVSGG), Asp165, Gly178, Glu182, and Asn262. Asp290 provides a ligand contact to Fe cation. Residues 346–547 (IIPEHLIGKG…KEVEKRARYL (202 aa)) enclose the Protein kinase domain. Residues 352–360 (IGKGAEADI) and Lys373 contribute to the ATP site. Asp465 acts as the Proton acceptor; for kinase activity in catalysis.

The protein in the N-terminal section; belongs to the KAE1 / TsaD family. It in the C-terminal section; belongs to the protein kinase superfamily. Tyr protein kinase family. BUD32 subfamily. In terms of assembly, component of the KEOPS complex that consists of Kae1, Bud32, Cgi121 and Pcc1; the whole complex dimerizes. Requires Fe(2+) as cofactor.

The protein resides in the cytoplasm. It carries out the reaction L-seryl-[protein] + ATP = O-phospho-L-seryl-[protein] + ADP + H(+). The enzyme catalyses L-threonyl-[protein] + ATP = O-phospho-L-threonyl-[protein] + ADP + H(+). It catalyses the reaction L-threonylcarbamoyladenylate + adenosine(37) in tRNA = N(6)-L-threonylcarbamoyladenosine(37) in tRNA + AMP + H(+). In terms of biological role, required for the formation of a threonylcarbamoyl group on adenosine at position 37 (t(6)A37) in tRNAs that read codons beginning with adenine. Is a component of the KEOPS complex that is probably involved in the transfer of the threonylcarbamoyl moiety of threonylcarbamoyl-AMP (TC-AMP) to the N6 group of A37. The Kae1 domain likely plays a direct catalytic role in this reaction. The Bud32 domain probably displays kinase activity that regulates Kae1 function. This is Probable bifunctional tRNA threonylcarbamoyladenosine biosynthesis protein from Methanococcus maripaludis (strain C7 / ATCC BAA-1331).